The following is a 371-amino-acid chain: MDVSMDQDTRIDLKNFTLEELTEFLAGMGKERFRAGQVMRWMYHRLVDDFDAMSDLSKVLRAELHQRARISRLTPEATEDSRDGTRKYLFRLEDGETIESVRIPMDDNRATLCISTQVGCAMGCVFCHTGSFGLVRNLTPGEIVNQVCAALADGPVNNIVLMGMGEPLHNLDNVVKALQILYMPQGLDYSPRKVTLSTAGLVPQMQELGKRVRVNLAVSLNATTDEVRNRLMPVNQRYPLQQLMAACRQYPLHAKKRITFEYILIRDVNDSDQDARRLVKLLHGIKAKVNIIPFNEHSASEFRAPTEERISRFQGYLLDHGMVAIRRASKGQDISAACGQLKGKLTVSPPAQESERNSARPDRSQGKGKHL.

Glutamate 99 (proton acceptor) is an active-site residue. Residues 106–333 form the Radical SAM core domain; sequence DDNRATLCIS…AIRRASKGQD (228 aa). Cysteine 113 and cysteine 338 are disulfide-bonded. [4Fe-4S] cluster contacts are provided by cysteine 120, cysteine 124, and cysteine 127. Residues 165–166, serine 197, 219–221, and asparagine 295 each bind S-adenosyl-L-methionine; these read GE and SLN. Residue cysteine 338 is the S-methylcysteine intermediate of the active site. The disordered stretch occupies residues 345-371; the sequence is LTVSPPAQESERNSARPDRSQGKGKHL. Basic and acidic residues predominate over residues 353–365; it reads ESERNSARPDRSQ.

This sequence belongs to the radical SAM superfamily. RlmN family. [4Fe-4S] cluster is required as a cofactor.

It localises to the cytoplasm. It catalyses the reaction adenosine(2503) in 23S rRNA + 2 reduced [2Fe-2S]-[ferredoxin] + 2 S-adenosyl-L-methionine = 2-methyladenosine(2503) in 23S rRNA + 5'-deoxyadenosine + L-methionine + 2 oxidized [2Fe-2S]-[ferredoxin] + S-adenosyl-L-homocysteine. It carries out the reaction adenosine(37) in tRNA + 2 reduced [2Fe-2S]-[ferredoxin] + 2 S-adenosyl-L-methionine = 2-methyladenosine(37) in tRNA + 5'-deoxyadenosine + L-methionine + 2 oxidized [2Fe-2S]-[ferredoxin] + S-adenosyl-L-homocysteine. Functionally, specifically methylates position 2 of adenine 2503 in 23S rRNA and position 2 of adenine 37 in tRNAs. m2A2503 modification seems to play a crucial role in the proofreading step occurring at the peptidyl transferase center and thus would serve to optimize ribosomal fidelity. This chain is Dual-specificity RNA methyltransferase RlmN, found in Syntrophotalea carbinolica (strain DSM 2380 / NBRC 103641 / GraBd1) (Pelobacter carbinolicus).